The primary structure comprises 1411 residues: Uveal autoantigen with coiled-coil domains and ankyrin repeats (1411 aa).

Residue M1 is modified to N-acetylmethionine. The interval 1 to 30 (MKSLKSRLWKQDAPGPTSPSSPTAVASTQS) is disordered. The span at 13 to 30 (APGPTSPSSPTAVASTQS) shows a compositional bias: low complexity. ANK repeat units lie at residues 69 to 98 (EGRSAFHVVASKGNLECLNAILTHGIDVAT), 102 to 131 (AGRNALHLAAKYGHALCLQKLLQYNCPTEH), 135 to 164 (QGRTALHDAVMADCPSSIQLLCDHGASVNA), 168 to 197 (DGRTPLVLATQMCRPTICQLLIDRGADVNS), 201 to 230 (QNRTALMLGCEYGCRDAVEVLVKNGADLTL), and 234 to 263 (LGHDSSYYARIGDNLDILNLLKTASENTNK). The disordered stretch occupies residues 263–301 (KGRELWRKGPPLQQRNLSHTQDEGSVKSTQREQREPHSF). The residue at position 280 (S280) is a Phosphoserine. The span at 282-301 (TQDEGSVKSTQREQREPHSF) shows a compositional bias: basic and acidic residues. Coiled-coil stretches lie at residues 299–379 (HSFQ…NRFK), 442–624 (SENE…LKEL), and 652–1380 (VKRL…AIYR). The disordered stretch occupies residues 1006 to 1031 (GLKEQLSEQTHKCRQRDEEVKKGKQE).

As to quaternary structure, component of the apoptosome complex, composed of APAF1, pro-caspase-9 and UACA. In the complex, it probably interacts directly with APAF1. Interacts with LGALS3, ARF6 and ACTB. Interacts with RAB39A. Highly expressed in heart, liver, kidney and testis. Weakly expressed in lung and skeletal muscle. Not expressed in brain and spleen.

It localises to the nucleus. The protein localises to the cytoplasm. The protein resides in the cytoskeleton. Functionally, regulates APAF1 expression and plays an important role in the regulation of stress-induced apoptosis. Promotes apoptosis by regulating three pathways, apoptosome up-regulation, LGALS3/galectin-3 down-regulation and NF-kappa-B inactivation. Regulates the redistribution of APAF1 into the nucleus after proapoptotic stress. Down-regulates the expression of LGALS3 by inhibiting NFKB1. Its function is as follows. Modulates isoactin dynamics to regulate the morphological alterations required for cell growth and motility. Interaction with ARF6 may modulate cell shape and motility after injury. May be involved in multiple neurite formation. This is Uveal autoantigen with coiled-coil domains and ankyrin repeats (Uaca) from Mus musculus (Mouse).